Consider the following 360-residue polypeptide: Threonine synthase (360 aa).

Position 69 is an N6-(pyridoxal phosphate)lysine (Lys-69). Residues Asn-95, Gly-196–Asn-200, and Thr-326 each bind pyridoxal 5'-phosphate.

It belongs to the threonine synthase family. As to quaternary structure, homodimer. It depends on pyridoxal 5'-phosphate as a cofactor.

It carries out the reaction O-phospho-L-homoserine + H2O = L-threonine + phosphate. The protein operates within amino-acid biosynthesis; L-threonine biosynthesis; L-threonine from L-aspartate: step 5/5. In terms of biological role, catalyzes the gamma-elimination of phosphate from L-phosphohomoserine and the beta-addition of water to produce L-threonine. This Mycobacterium bovis (strain ATCC BAA-935 / AF2122/97) protein is Threonine synthase (thrC).